The sequence spans 272 residues: Glycerol-3-phosphate acyltransferase (272 aa).

The next 6 helical transmembrane spans lie at 9-29, 60-80, 99-119, 149-169, 173-193, and 226-246; these read IIILFLFIGYFIGNILFGILI, AIVMVLDFFKSWFSTFVCLLI, VIIYLGGFAAIIGHCFPCFYF, ASISPWMFFICFVLFWSICLI, VSLASIVTVFLLPIWSLIPHL, and LNWWYILVTFLLELLTAVLVI.

It belongs to the PlsY family. As to quaternary structure, probably interacts with PlsX.

The protein resides in the cell membrane. It catalyses the reaction an acyl phosphate + sn-glycerol 3-phosphate = a 1-acyl-sn-glycero-3-phosphate + phosphate. The protein operates within lipid metabolism; phospholipid metabolism. Its function is as follows. Catalyzes the transfer of an acyl group from acyl-phosphate (acyl-PO(4)) to glycerol-3-phosphate (G3P) to form lysophosphatidic acid (LPA). This enzyme utilizes acyl-phosphate as fatty acyl donor, but not acyl-CoA or acyl-ACP. This Malacoplasma penetrans (strain HF-2) (Mycoplasma penetrans) protein is Glycerol-3-phosphate acyltransferase.